An 853-amino-acid polypeptide reads, in one-letter code: DNA mismatch repair protein MutS (853 aa).

614–621 (GPNMGGKS) provides a ligand contact to ATP.

It belongs to the DNA mismatch repair MutS family.

Its function is as follows. This protein is involved in the repair of mismatches in DNA. It is possible that it carries out the mismatch recognition step. This protein has a weak ATPase activity. This chain is DNA mismatch repair protein MutS, found in Klebsiella pneumoniae subsp. pneumoniae (strain ATCC 700721 / MGH 78578).